The primary structure comprises 432 residues: Ubiquitin-like modifier-activating enzyme 5 (432 aa).

Residues 25–47 (ETKKNQTPSVLKGPTVSQERPSA) form a disordered region. Polar residues predominate over residues 29–44 (NQTPSVLKGPTVSQER). ATP is bound by residues Gly-96, Asp-117, Lys-140, Asn-163, and Asn-196. Zn(2+) contacts are provided by Cys-238 and Cys-241. The active-site Glycyl thioester intermediate is the Cys-262. 2 residues coordinate Zn(2+): Cys-315 and Cys-320. The interval 363–406 (DTTEAPSSSAATEVAPGLKFAYEPTQTPKKNSSDNLKLSPSQAV) is disordered. The span at 386 to 406 (PTQTPKKNSSDNLKLSPSQAV) shows a compositional bias: polar residues.

Belongs to the ubiquitin-activating E1 family. UBA5 subfamily. In terms of assembly, interacts with ufc-1.

Its function is as follows. E1-like enzyme which activates ufm-1. Required for interaction between ufm-1 and ufc-1. This chain is Ubiquitin-like modifier-activating enzyme 5, found in Caenorhabditis briggsae.